We begin with the raw amino-acid sequence, 278 residues long: MLEILMSLTAAICWAFNGIAYRKGVKDVSAFTANFHRTLFATVYFLPLALRDFPGVVIDLQTALVLVISAMLSFYIGDLSYFASLKRSPVSIALPASSTYPVYVVLLSTVIYGAELSLNALISAILVFVAVYIIYGSGEKGETSGLFYALLAAFSWALAILTLDFLTDRLPVSIVAFVRLLLCLILLSFTAKKDELSTEIRLFFRSVRGIFLLLGIMLFITAIKVSSSWNVVQPSSTSPVFAAIFGAIFLKERISFRLVAGIFVIILAILLLLLPPLQ.

Transmembrane regions (helical) follow at residues 1-21 (MLEI…GIAY), 30-50 (AFTA…PLAL), 56-76 (VVID…SFYI), 92-112 (IALP…TVIY), 116-136 (LSLN…IIYG), 146-166 (LFYA…LDFL), 170-190 (LPVS…LSFT), 209-229 (GIFL…SSSW), 230-250 (NVVQ…AIFL), and 258-278 (LVAG…PPLQ). EamA domains follow at residues 12–136 (ICWA…IIYG) and 154–274 (FSWA…LLLL).

The protein belongs to the EamA transporter family.

It localises to the cell membrane. This is an uncharacterized protein from Archaeoglobus fulgidus (strain ATCC 49558 / DSM 4304 / JCM 9628 / NBRC 100126 / VC-16).